Reading from the N-terminus, the 284-residue chain is Aliphatic sulfonates import ATP-binding protein SsuB (284 aa).

An ABC transporter domain is found at 21–242; it reads LRIAHAVKRY…HRGAPAFARL (222 aa). Position 53 to 60 (53 to 60) interacts with ATP; that stretch reads GRSGCGKS.

Belongs to the ABC transporter superfamily. Aliphatic sulfonates importer (TC 3.A.1.17.2) family. As to quaternary structure, the complex is composed of two ATP-binding proteins (SsuB), two transmembrane proteins (SsuC) and a solute-binding protein (SsuA).

The protein localises to the cell inner membrane. The catalysed reaction is ATP + H2O + aliphatic sulfonate-[sulfonate-binding protein]Side 1 = ADP + phosphate + aliphatic sulfonateSide 2 + [sulfonate-binding protein]Side 1.. In terms of biological role, part of the ABC transporter complex SsuABC involved in aliphatic sulfonates import. Responsible for energy coupling to the transport system. In Ralstonia nicotianae (strain ATCC BAA-1114 / GMI1000) (Ralstonia solanacearum), this protein is Aliphatic sulfonates import ATP-binding protein SsuB.